The sequence spans 223 residues: Endonuclease V (223 aa).

2 residues coordinate Mg(2+): aspartate 45 and aspartate 113.

It belongs to the endonuclease V family. Mg(2+) serves as cofactor.

The protein resides in the cytoplasm. The enzyme catalyses Endonucleolytic cleavage at apurinic or apyrimidinic sites to products with a 5'-phosphate.. In terms of biological role, DNA repair enzyme involved in the repair of deaminated bases. Selectively cleaves double-stranded DNA at the second phosphodiester bond 3' to a deoxyinosine leaving behind the intact lesion on the nicked DNA. The sequence is that of Endonuclease V from Dehalococcoides mccartyi (strain ATCC BAA-2100 / JCM 16839 / KCTC 5957 / BAV1).